We begin with the raw amino-acid sequence, 449 residues long: Probable glycine dehydrogenase (decarboxylating) subunit 1 (449 aa).

This sequence belongs to the GcvP family. N-terminal subunit subfamily. The glycine cleavage system is composed of four proteins: P, T, L and H. In this organism, the P 'protein' is a heterodimer of two subunits.

It carries out the reaction N(6)-[(R)-lipoyl]-L-lysyl-[glycine-cleavage complex H protein] + glycine + H(+) = N(6)-[(R)-S(8)-aminomethyldihydrolipoyl]-L-lysyl-[glycine-cleavage complex H protein] + CO2. In terms of biological role, the glycine cleavage system catalyzes the degradation of glycine. The P protein binds the alpha-amino group of glycine through its pyridoxal phosphate cofactor; CO(2) is released and the remaining methylamine moiety is then transferred to the lipoamide cofactor of the H protein. The chain is Probable glycine dehydrogenase (decarboxylating) subunit 1 from Sulfurisphaera tokodaii (strain DSM 16993 / JCM 10545 / NBRC 100140 / 7) (Sulfolobus tokodaii).